Reading from the N-terminus, the 465-residue chain is Protein DML1 (465 aa).

The protein belongs to the misato family.

It localises to the mitochondrion. Its function is as follows. Involved in the partitioning of the mitochondrial organelle and mitochondrial DNA (mtDNA) inheritance. In Eremothecium gossypii (strain ATCC 10895 / CBS 109.51 / FGSC 9923 / NRRL Y-1056) (Yeast), this protein is Protein DML1 (DML1).